The chain runs to 247 residues: Lipoprotein-releasing system ATP-binding protein LolD 2 (247 aa).

Residues Leu-19 to Gly-247 enclose the ABC transporter domain. Gly-56–Thr-63 contacts ATP.

It belongs to the ABC transporter superfamily. Lipoprotein translocase (TC 3.A.1.125) family. In terms of assembly, the complex is composed of two ATP-binding proteins (LolD) and two transmembrane proteins (LolC and LolE).

Its subcellular location is the cell inner membrane. Functionally, part of the ABC transporter complex LolCDE involved in the translocation of mature outer membrane-directed lipoproteins, from the inner membrane to the periplasmic chaperone, LolA. Responsible for the formation of the LolA-lipoprotein complex in an ATP-dependent manner. The protein is Lipoprotein-releasing system ATP-binding protein LolD 2 of Chlorobaculum tepidum (strain ATCC 49652 / DSM 12025 / NBRC 103806 / TLS) (Chlorobium tepidum).